Here is a 92-residue protein sequence, read N- to C-terminus: Putative septation protein SpoVG (92 aa).

This sequence belongs to the SpoVG family.

In terms of biological role, could be involved in septation. This is Putative septation protein SpoVG from Clostridium botulinum (strain Eklund 17B / Type B).